Reading from the N-terminus, the 595-residue chain is uncharacterized protein (595 aa).

Disordered stretches follow at residues valine 50–lysine 159, threonine 398–leucine 430, and valine 450–lysine 595. The span at serine 83–lysine 122 shows a compositional bias: low complexity. A compositionally biased stretch (basic and acidic residues) spans phenylalanine 123–serine 132. Acidic residues predominate over residues aspartate 137–serine 146. Residues threonine 398–threonine 409 show a composition bias toward low complexity. A compositionally biased stretch (pro residues) spans isoleucine 410–glutamate 420. A compositionally biased stretch (low complexity) spans proline 421–leucine 430. A compositionally biased stretch (basic and acidic residues) spans lysine 454–serine 463. Residues isoleucine 467 to serine 476 are compositionally biased toward pro residues. Positions isoleucine 477–lysine 529 are enriched in low complexity. Positions leucine 530–serine 542 are enriched in basic and acidic residues. Over residues glycine 544–glutamate 553 the composition is skewed to acidic residues. Residues threonine 559–threonine 570 are compositionally biased toward basic residues. Residues asparagine 571 to lysine 580 show a composition bias toward low complexity. Basic residues predominate over residues asparagine 581–lysine 595.

This is an uncharacterized protein from Acanthamoeba polyphaga mimivirus (APMV).